Here is a 98-residue protein sequence, read N- to C-terminus: HssA/B-like protein 50 (98 aa).

2 disordered regions span residues methionine 1–serine 26 and threonine 68–isoleucine 98. Residues glycine 84–isoleucine 98 are compositionally biased toward gly residues.

It belongs to the hssA/B family.

This is HssA/B-like protein 50 (hssl50) from Dictyostelium discoideum (Social amoeba).